The primary structure comprises 239 residues: Probable transcriptional regulatory protein BCG9842_B4761 (239 aa).

This sequence belongs to the TACO1 family. YeeN subfamily.

The protein localises to the cytoplasm. This Bacillus cereus (strain G9842) protein is Probable transcriptional regulatory protein BCG9842_B4761.